Here is a 756-residue protein sequence, read N- to C-terminus: Polyribonucleotide nucleotidyltransferase (756 aa).

Positions 527 and 533 each coordinate Mg(2+). Residues 593–652 form the KH domain; it reads PRITTIKVPVDKIGEVIGPKGKMINSITEETGASISIEDDGTVFVGASNGEAAQAAIDKI. Residues 664–733 enclose the S1 motif domain; the sequence is GERFLGTVVK…NRGKISLVLV (70 aa).

The protein belongs to the polyribonucleotide nucleotidyltransferase family. Mg(2+) is required as a cofactor.

It is found in the cytoplasm. It carries out the reaction RNA(n+1) + phosphate = RNA(n) + a ribonucleoside 5'-diphosphate. Its function is as follows. Involved in mRNA degradation. Catalyzes the phosphorolysis of single-stranded polyribonucleotides processively in the 3'- to 5'-direction. The chain is Polyribonucleotide nucleotidyltransferase from Mycolicibacterium gilvum (strain PYR-GCK) (Mycobacterium gilvum (strain PYR-GCK)).